The following is a 315-amino-acid chain: DNA-directed RNA polymerase subunit alpha (315 aa).

Positions 1 to 228 are alpha N-terminal domain (alpha-NTD); the sequence is MIEMEKPKVE…EHLNLFITLK (228 aa). Positions 245–315 are alpha C-terminal domain (alpha-CTD); that stretch reads KEKVLEMTIE…LGLGLRPSDE (71 aa).

It belongs to the RNA polymerase alpha chain family. In terms of assembly, homodimer. The RNAP catalytic core consists of 2 alpha, 1 beta, 1 beta' and 1 omega subunit. When a sigma factor is associated with the core the holoenzyme is formed, which can initiate transcription.

It catalyses the reaction RNA(n) + a ribonucleoside 5'-triphosphate = RNA(n+1) + diphosphate. In terms of biological role, DNA-dependent RNA polymerase catalyzes the transcription of DNA into RNA using the four ribonucleoside triphosphates as substrates. This chain is DNA-directed RNA polymerase subunit alpha, found in Alkaliphilus metalliredigens (strain QYMF).